The following is a 943-amino-acid chain: MSKKRLYEIAKEVGVESKVIVAKAQELGLSVKSHSSSVEEADANRITSSLKPGTAKDESKPAPKATPTPKEEKVEPKVDKASVAKSAPAKETSKAEVKEASVALKKPKSRNFKAEREARAKAEAERRKNGGGRDNRNRNQQGNDQGKRHNNDRRNQKGNGQGDHNKGNRDNSTNHDRNFQGKLRNDQNQNNRRDNARNNQAGPRIDLKARAAALKAEQNAEYSRQSETRFREEKAAEQRRAKEQEKARKEKQQVKVAVQKAAAETKPAPKPAPVAPQSAPTAQVQDTRRKKVRPNKSRDNRRVNEDGPKQTRNNKWNNQNQVRNQRNSNWNKNKNKKGKNNRGNSAPKPVTERKFHELPKEFEYTEGMTVAEIAKRIKREPAEIVKKLFMMGVMATQNQSLDGDTIELLMVDYGIEATKKEEVDNADIERFFVDEDYLNKDAMVERAPVVTIMGHVDHGKTTLLDTLRNSRVATGEAGGITQHIGAYQIEEGGKKITFLDTPGHAAFTSMRARGASVTDITVLIVAADDGVMPQTIEAINHSKAAGVPIIVAINKIDKPDANPERVIGELAEHGVISTAWGGDSEFVEISAKFGQNIEELLETILLVAEVEELKADPTVRAIGTVIEARLDKGKGAVATLLVQQGTLNVQDPIVVGNTFGRVRAMTNDLGRRIKTAGPSAPVSITGLNEAPMAGDHFAVYEDEKAARAAGEERAKRALMKQRQQTHRVSLDNLFDTLKAGEMKTVNVIIKADVQGSVEALAASLLKIDVEGVRVNVVHSAVGAINESDITLAEASDAVVIGFNVRPTPQARQQAETDEVEIRLHSIIYKVIEEIEDAMKGMLDPEFEEKIIGEAVIRETFKVSKVGTIGGFMVTNGKITRDSSARVIRDGVVIFDGKLASLKHYKDDVKEVGNAQEGGLTIENYNDIKVDDVIEAYIMEEIKR.

The interval 30 to 357 (SVKSHSSSVE…KPVTERKFHE (328 aa)) is disordered. Basic and acidic residues-rich tracts occupy residues 69–82 (PKEE…DKAS), 112–137 (FKAE…DNRN), 145–155 (QGKRHNNDRRN), 163–196 (DHNK…RDNA), and 224–253 (RQSE…EKQQ). Residues 254–266 (VKVAVQKAAAETK) show a composition bias toward low complexity. The span at 296–309 (KSRDNRRVNEDGPK) shows a compositional bias: basic and acidic residues. The segment covering 313–332 (NNKWNNQNQVRNQRNSNWNK) has biased composition (low complexity). The tr-type G domain maps to 445-614 (ERAPVVTIMG…LLVAEVEELK (170 aa)). Residues 454 to 461 (GHVDHGKT) form a G1 region. 454–461 (GHVDHGKT) contributes to the GTP binding site. Residues 479–483 (GITQH) are G2. Positions 500-503 (DTPG) are G3. GTP is bound by residues 500 to 504 (DTPGH) and 554 to 557 (NKID). The segment at 554–557 (NKID) is G4. The segment at 590–592 (SAK) is G5.

The protein belongs to the TRAFAC class translation factor GTPase superfamily. Classic translation factor GTPase family. IF-2 subfamily.

It is found in the cytoplasm. Its function is as follows. One of the essential components for the initiation of protein synthesis. Protects formylmethionyl-tRNA from spontaneous hydrolysis and promotes its binding to the 30S ribosomal subunits. Also involved in the hydrolysis of GTP during the formation of the 70S ribosomal complex. This chain is Translation initiation factor IF-2, found in Streptococcus thermophilus (strain ATCC BAA-250 / LMG 18311).